The following is a 363-amino-acid chain: Spermatogenesis-associated protein 22 (363 aa).

4 stretches are compositionally biased toward polar residues: residues 1-12 (MKRSLNENSARS), 30-48 (QPLTSNPLKDDSGISTPSD), 98-108 (IQSNTGRSQGG), and 140-157 (NDGKNSCPVSSGAQQQKQ). Disordered stretches follow at residues 1–51 (MKRS…DNYD), 98–127 (IQSNTGRSQGGWSYRDGNKNTSLKTWNKND), and 140–170 (NDGKNSCPVSSGAQQQKQLRIPEPPNLSRNK).

Component of a multiprotein complex with MEIOB and RPA2. Interacts with MEIOB. Interacts with the complex BRME1:HSF2BP:BRCA2. Highly expressed in adult testis.

It localises to the chromosome. Meiosis-specific protein required for homologous recombination in meiosis I. In Homo sapiens (Human), this protein is Spermatogenesis-associated protein 22.